Consider the following 197-residue polypeptide: uncharacterized protein (197 aa).

The first 23 residues, 1 to 23 (MSARAPKELRLALPPCLLNRTFA), serve as a signal peptide directing secretion. Asn-19 and Asn-26 each carry an N-linked (GlcNAc...) asparagine glycan. Residues 24 to 61 (SPNASGSGNTGARGPGAGGSGTCITQVGQQLFQSFSST) are Extracellular-facing. A helical membrane pass occupies residues 62 to 82 (LVLIVLVTLIFCLIVLSLSTF). Residues 83–197 (HIHKRRMKKR…EGLLQTVVLS (115 aa)) are Cytoplasmic-facing. The tract at residues 94–179 (MQRAQEEYER…ASSPQGAHAV (86 aa)) is disordered. 2 stretches are compositionally biased toward basic and acidic residues: residues 96-107 (RAQEEYERDHCS) and 125-136 (HAKETRLERQPR). Low complexity predominate over residues 147 to 161 (SSSSSSSPGLPCQGP). The span at 162–171 (CAPPPPPPAS) shows a compositional bias: pro residues.

The protein resides in the membrane. This is an uncharacterized protein from Pongo abelii (Sumatran orangutan).